The chain runs to 206 residues: Orotate phosphoribosyltransferase (206 aa).

Residues arginine 97, lysine 98, lysine 101, and 125 to 133 (NDVIASGRS) each bind 5-phospho-alpha-D-ribose 1-diphosphate. Arginine 157 is an orotate binding site.

Belongs to the purine/pyrimidine phosphoribosyltransferase family. PyrE subfamily. Homodimer. Mg(2+) is required as a cofactor.

It carries out the reaction orotidine 5'-phosphate + diphosphate = orotate + 5-phospho-alpha-D-ribose 1-diphosphate. It participates in pyrimidine metabolism; UMP biosynthesis via de novo pathway; UMP from orotate: step 1/2. Catalyzes the transfer of a ribosyl phosphate group from 5-phosphoribose 1-diphosphate to orotate, leading to the formation of orotidine monophosphate (OMP). In Chlamydia felis (strain Fe/C-56) (Chlamydophila felis), this protein is Orotate phosphoribosyltransferase.